We begin with the raw amino-acid sequence, 787 residues long: Endonuclease MutS2 (787 aa).

331 to 338 serves as a coordination point for ATP; sequence GPNTGGKT. In terms of domain architecture, Smr spans 711–786; it reads IDVRGKTSDD…EQGVTIVELR (76 aa).

The protein belongs to the DNA mismatch repair MutS family. MutS2 subfamily. In terms of assembly, homodimer. Binds to stalled ribosomes, contacting rRNA.

Endonuclease that is involved in the suppression of homologous recombination and thus may have a key role in the control of bacterial genetic diversity. In terms of biological role, acts as a ribosome collision sensor, splitting the ribosome into its 2 subunits. Detects stalled/collided 70S ribosomes which it binds and splits by an ATP-hydrolysis driven conformational change. Acts upstream of the ribosome quality control system (RQC), a ribosome-associated complex that mediates the extraction of incompletely synthesized nascent chains from stalled ribosomes and their subsequent degradation. Probably generates substrates for RQC. The chain is Endonuclease MutS2 from Caldicellulosiruptor saccharolyticus (strain ATCC 43494 / DSM 8903 / Tp8T 6331).